A 377-amino-acid chain; its full sequence is MPGDYYQTLGVTRDADKDEIKRAYRRLARKYHPDVNKEPGAEEKFKEINRAYEVLSEPEIRQRYDQFGEAGVSGGGAQGFDVGNMGDFADIFETIFGGFGGGMGGQQRGRRRANGPTRGDDLRLDLQLTFQEAIFGGEKEIRIPHLESCQVCEGTGAKPGTGVKTCGTCNGAGQVRRATRTPFGSFAQVSACPTCNGSGEVIEQKCEACNGVGRKQETKKLKITIPAGVDDGTRLRVGKEGDAGLRGGPAGDLYVFLMVETDKHFVREGMNIRSNLEVSYLQAILGCRLEVDTVDGKAELTIPAGTQPNTVLTLENKGVPKLGNATIRGDHLITVKVQIPTRINSEERELLERLATIKGESHGKGGLEGFLGGLFHK.

Residues 4–68 enclose the J domain; that stretch reads DYYQTLGVTR…EIRQRYDQFG (65 aa). The segment at 136-218 adopts a CR-type zinc-finger fold; that stretch reads GGEKEIRIPH…CNGVGRKQET (83 aa). Residues cysteine 149, cysteine 152, cysteine 166, cysteine 169, cysteine 192, cysteine 195, cysteine 206, and cysteine 209 each coordinate Zn(2+). 4 CXXCXGXG motif repeats span residues 149 to 156, 166 to 173, 192 to 199, and 206 to 213; these read CQVCEGTG, CGTCNGAG, CPTCNGSG, and CEACNGVG.

This sequence belongs to the DnaJ family. Homodimer. Zn(2+) is required as a cofactor.

The protein localises to the cytoplasm. In terms of biological role, participates actively in the response to hyperosmotic and heat shock by preventing the aggregation of stress-denatured proteins and by disaggregating proteins, also in an autonomous, DnaK-independent fashion. Unfolded proteins bind initially to DnaJ; upon interaction with the DnaJ-bound protein, DnaK hydrolyzes its bound ATP, resulting in the formation of a stable complex. GrpE releases ADP from DnaK; ATP binding to DnaK triggers the release of the substrate protein, thus completing the reaction cycle. Several rounds of ATP-dependent interactions between DnaJ, DnaK and GrpE are required for fully efficient folding. Also involved, together with DnaK and GrpE, in the DNA replication of plasmids through activation of initiation proteins. This is Chaperone protein DnaJ 1 from Synechocystis sp. (strain ATCC 27184 / PCC 6803 / Kazusa).